The primary structure comprises 231 residues: Cytochrome c oxidase subunit 2 (231 aa).

Residues 1–14 are Mitochondrial intermembrane-facing; it reads MATPAQLGLQNATS. Residues 15–45 form a helical membrane-spanning segment; sequence PIMEELIAFHDHALMIIFLISSLVLYIISLM. The Mitochondrial matrix segment spans residues 46 to 59; the sequence is LTTKLTHTSTMNAQ. A helical membrane pass occupies residues 60–87; that stretch reads EIEMIWTILPAIILIMIALPSLRILYMT. The Mitochondrial intermembrane portion of the chain corresponds to 88–231; it reads DEFNKPYLTL…WASYLYIVSL (144 aa). 6 residues coordinate Cu cation: His161, Cys196, Glu198, Cys200, His204, and Met207. Mg(2+) is bound at residue Glu198.

The protein belongs to the cytochrome c oxidase subunit 2 family. Component of the cytochrome c oxidase (complex IV, CIV), a multisubunit enzyme composed of 14 subunits. The complex is composed of a catalytic core of 3 subunits MT-CO1, MT-CO2 and MT-CO3, encoded in the mitochondrial DNA, and 11 supernumerary subunits COX4I, COX5A, COX5B, COX6A, COX6B, COX6C, COX7A, COX7B, COX7C, COX8 and NDUFA4, which are encoded in the nuclear genome. The complex exists as a monomer or a dimer and forms supercomplexes (SCs) in the inner mitochondrial membrane with NADH-ubiquinone oxidoreductase (complex I, CI) and ubiquinol-cytochrome c oxidoreductase (cytochrome b-c1 complex, complex III, CIII), resulting in different assemblies (supercomplex SCI(1)III(2)IV(1) and megacomplex MCI(2)III(2)IV(2)). Found in a complex with TMEM177, COA6, COX18, COX20, SCO1 and SCO2. Interacts with TMEM177 in a COX20-dependent manner. Interacts with COX20. Interacts with COX16. Requires Cu cation as cofactor.

Its subcellular location is the mitochondrion inner membrane. It catalyses the reaction 4 Fe(II)-[cytochrome c] + O2 + 8 H(+)(in) = 4 Fe(III)-[cytochrome c] + 2 H2O + 4 H(+)(out). In terms of biological role, component of the cytochrome c oxidase, the last enzyme in the mitochondrial electron transport chain which drives oxidative phosphorylation. The respiratory chain contains 3 multisubunit complexes succinate dehydrogenase (complex II, CII), ubiquinol-cytochrome c oxidoreductase (cytochrome b-c1 complex, complex III, CIII) and cytochrome c oxidase (complex IV, CIV), that cooperate to transfer electrons derived from NADH and succinate to molecular oxygen, creating an electrochemical gradient over the inner membrane that drives transmembrane transport and the ATP synthase. Cytochrome c oxidase is the component of the respiratory chain that catalyzes the reduction of oxygen to water. Electrons originating from reduced cytochrome c in the intermembrane space (IMS) are transferred via the dinuclear copper A center (CU(A)) of subunit 2 and heme A of subunit 1 to the active site in subunit 1, a binuclear center (BNC) formed by heme A3 and copper B (CU(B)). The BNC reduces molecular oxygen to 2 water molecules using 4 electrons from cytochrome c in the IMS and 4 protons from the mitochondrial matrix. The sequence is that of Cytochrome c oxidase subunit 2 (MT-CO2) from Aotus nigriceps (Black-headed night monkey).